A 398-amino-acid polypeptide reads, in one-letter code: Lysophospholipid transporter LplT (398 aa).

12 helical membrane-spanning segments follow: residues 19-39 (VIVAQFLSAFGDNALLFATLA), 53-73 (VLQMVFVGAYILFAPFVGQIA), 96-116 (ICLGVNPFVGYTLVGIGAAAY), 139-159 (LMEASTIAAILLGSVAGGVLA), 164-184 (IAALVACTLAYAGAVVANLFI), 195-213 (SWQLAAMIRSFFCACVVLW), 227-247 (LFWGAGVTLRFLVVLWVPVAL), 257-277 (YLNAMVAVGIVVGAGAAAKLV), 281-301 (TVSRCMPAGILIGVVVAMFSL), 304-324 (ALLPAYALLLLIGILGGFFVV), 352-372 (NSTMLLMLGLYSLAVMVGVPA), and 373-393 (VATGIGFGVLFALAIAALWIW).

It belongs to the major facilitator superfamily. LplT (TC 2.A.1.42) family.

Its subcellular location is the cell inner membrane. Functionally, catalyzes the facilitated diffusion of 2-acyl-glycero-3-phosphoethanolamine (2-acyl-GPE) into the cell. In Salmonella arizonae (strain ATCC BAA-731 / CDC346-86 / RSK2980), this protein is Lysophospholipid transporter LplT.